Reading from the N-terminus, the 1178-residue chain is Integrin alpha-2 (1178 aa).

Residues 1–26 (MGPGQAGGALLLRLLMLVQGILNCLA) form the signal peptide. At 27-1129 (YNVGLPGAKI…KPTEKAEVPT (1103 aa)) the chain is on the extracellular side. 2 FG-GAP repeats span residues 31–89 (LPGA…TATC) and 98–158 (ASIS…FLTS). Cys-80 and Cys-89 are oxidised to a cystine. Residues Asn-102 and Asn-109 are each glycosylated (N-linked (GlcNAc...) asparagine). Residues 185 to 362 (WEAVKNFLVK…TLGEQIFSIE (178 aa)) enclose the VWFA domain. FG-GAP repeat units lie at residues 363–417 (GTVQ…VIFP), 420–472 (AFDQ…KQGN), 474–536 (TVIQ…ILNQ), 537–595 (HQFL…TIRT), and 601–661 (ILGS…FTPD). Residues Asn-429, Asn-457, and Asn-472 are each glycosylated (N-linked (GlcNAc...) asparagine). Positions 480-482 (RGD) match the Cell attachment site motif. Ca(2+) is bound by residues Asp-496, Asp-498, Asp-500, Asp-504, Asp-560, Asn-562, Asp-564, Asp-568, Asp-624, Asn-626, Asp-628, and Asp-632. Cystine bridges form between Cys-677–Cys-734, Cys-786–Cys-792, Cys-862–Cys-873, Cys-1016–Cys-1047, and Cys-1052–Cys-1057. A glycan (N-linked (GlcNAc...) asparagine) is linked at Asn-696. Asn-1054, Asn-1071, and Asn-1078 each carry an N-linked (GlcNAc...) asparagine glycan. The chain crosses the membrane as a helical span at residues 1130–1151 (GVIIGSIIAGILLLLAMTAGLW). At 1152-1178 (KLGFFKRQYKKMGQNPDEMDETTELNS) the chain is on the cytoplasmic side. A GFFKR motif motif is present at residues 1154–1158 (GFFKR).

Belongs to the integrin alpha chain family. In terms of assembly, heterodimer of an alpha and a beta subunit. Alpha-2 associates with beta-1. Interacts with HPS5 and RAB21.

It is found in the membrane. Functionally, integrin alpha-2/beta-1 is a collagen receptor, being responsible for adhesion of platelets and other cells to collagens, modulation of collagen and collagenase gene expression, force generation and organization of newly synthesized extracellular matrix. It is also a receptor for laminins, collagen C-propeptides and E-cadherin. Mice homozygous for a null mutation in the alpha-2 die very early in embryogenesis. The sequence is that of Integrin alpha-2 (Itga2) from Mus musculus (Mouse).